Consider the following 152-residue polypeptide: Protein SprT-like (152 aa).

The region spanning 7-148 (QRLVEEVSLQ…GKCKGKLNLI (142 aa)) is the SprT-like domain. Histidine 67 is a binding site for Zn(2+). Residue glutamate 68 is part of the active site. A Zn(2+)-binding site is contributed by histidine 71.

It belongs to the SprT family. Zn(2+) is required as a cofactor.

The protein resides in the cytoplasm. The chain is Protein SprT-like from Bacillus cereus (strain 03BB102).